The following is a 182-amino-acid chain: Adenine phosphoribosyltransferase 4 (182 aa).

Belongs to the purine/pyrimidine phosphoribosyltransferase family. Homodimer.

The protein resides in the cytoplasm. It catalyses the reaction AMP + diphosphate = 5-phospho-alpha-D-ribose 1-diphosphate + adenine. Its pathway is purine metabolism; AMP biosynthesis via salvage pathway; AMP from adenine: step 1/1. In terms of biological role, catalyzes a salvage reaction resulting in the formation of AMP, that is energically less costly than de novo synthesis. May contribute to the recycling of adenine into adenylate nucleotides and the inactivation of cytokinins by phosphoribosylation. Possesses low activity toward adenine, but can efficiently convert cytokinins from free bases (active form) to the corresponding nucleotides (inactive form). This Arabidopsis thaliana (Mouse-ear cress) protein is Adenine phosphoribosyltransferase 4 (APT4).